Consider the following 382-residue polypeptide: Flap endonuclease 1-B (382 aa).

The N-domain stretch occupies residues 1 to 104; that stretch reads MGIHGLAKLI…GELAKRSERR (104 aa). Asp34 is a Mg(2+) binding site. 2 residues coordinate DNA: Arg47 and Arg70. The Mg(2+) site is built by Asp86, Glu158, Glu160, Asp179, and Asp181. The segment at 122 to 253 is I-domain; that stretch reads NIEKFNKRLV…KRAIDLIRQH (132 aa). Glu158 is a DNA binding site. The DNA site is built by Gly231 and Asp233. Asp233 contributes to the Mg(2+) binding site. An interaction with PCNA region spans residues 336–344; that stretch reads TQGRLDDFF. Positions 352–382 are disordered; sequence STKRKEVESKGSTKKKSKTGGTPAGKFKRGK.

Belongs to the XPG/RAD2 endonuclease family. FEN1 subfamily. Interacts with PCNA. Three molecules of fen1 bind to one PCNA trimer with each molecule binding to one PCNA monomer. PCNA stimulates the nuclease activity without altering cleavage specificity. The cofactor is Mg(2+). Post-translationally, phosphorylated. Phosphorylation upon DNA damage induces relocalization to the nuclear plasma.

It is found in the nucleus. Its subcellular location is the nucleolus. It localises to the nucleoplasm. The protein resides in the mitochondrion. Structure-specific nuclease with 5'-flap endonuclease and 5'-3' exonuclease activities involved in DNA replication and repair. During DNA replication, cleaves the 5'-overhanging flap structure that is generated by displacement synthesis when DNA polymerase encounters the 5'-end of a downstream Okazaki fragment. It enters the flap from the 5'-end and then tracks to cleave the flap base, leaving a nick for ligation. Also involved in the long patch base excision repair (LP-BER) pathway, by cleaving within the apurinic/apyrimidinic (AP) site-terminated flap. Acts as a genome stabilization factor that prevents flaps from equilibrating into structures that lead to duplications and deletions. Also possesses 5'-3' exonuclease activity on nicked or gapped double-stranded DNA, and exhibits RNase H activity. Also involved in replication and repair of rDNA and in repairing mitochondrial DNA. This is Flap endonuclease 1-B (fen1-b) from Xenopus laevis (African clawed frog).